Reading from the N-terminus, the 192-residue chain is Ion-translocating oxidoreductase complex subunit B (192 aa).

The interval 1-26 (MNTIWIAVGALTFLGLVFGAILGYAS) is hydrophobic. Residues 32 to 91 (EDDPVVEKIDAILPQSQCGQCGYPGCRPYAEAVGLQGEKINRCAPGGEAVMLKIADLLNV) form the 4Fe-4S domain. [4Fe-4S] cluster is bound by residues C49, C52, C57, C74, C117, C120, C123, C127, C147, C150, C153, and C157. 4Fe-4S ferredoxin-type domains lie at 108–137 (MLAVIDENHCIGCTKCIQACPVDAIVGATR) and 138–167 (AMHTVMSDLCTGCNLCVDPCPTHCIELRPV).

The protein belongs to the 4Fe4S bacterial-type ferredoxin family. RnfB subfamily. The complex is composed of six subunits: RsxA, RsxB, RsxC, RsxD, RsxE and RsxG. It depends on [4Fe-4S] cluster as a cofactor.

It is found in the cell inner membrane. Part of a membrane-bound complex that couples electron transfer with translocation of ions across the membrane. Required to maintain the reduced state of SoxR. The protein is Ion-translocating oxidoreductase complex subunit B of Salmonella arizonae (strain ATCC BAA-731 / CDC346-86 / RSK2980).